We begin with the raw amino-acid sequence, 215 residues long: 3-isopropylmalate dehydratase small subunit (215 aa).

The protein belongs to the LeuD family. LeuD type 1 subfamily. Heterodimer of LeuC and LeuD.

The catalysed reaction is (2R,3S)-3-isopropylmalate = (2S)-2-isopropylmalate. It functions in the pathway amino-acid biosynthesis; L-leucine biosynthesis; L-leucine from 3-methyl-2-oxobutanoate: step 2/4. Catalyzes the isomerization between 2-isopropylmalate and 3-isopropylmalate, via the formation of 2-isopropylmaleate. In Xylella fastidiosa (strain 9a5c), this protein is 3-isopropylmalate dehydratase small subunit.